We begin with the raw amino-acid sequence, 431 residues long: MGTNVVVVGTQWGDEGKGKIVDWLTENAGVVARFQGGHNAGHTLVIDGEQTVLHLIPSGILREDATCVIGNGVVLSAEALLEEIRELEARGVPARERLRISPSCPLILPCHVALDHAREKAKGKAAIGTTGRGIGPAYEDKVARRGVRLSDLFHRERLAQKLGELLDYHNFVLKHYFGAPTMDFQEVLDQALAHGEELRPLTADVGALLTAEMRTGRNILFEGAQGTLLDIDHGTYPFVTSSNTCAGAAAAGTGVGPRTLDYILGITKAYTTRVGQGPFPTELDFDDEMGMHLGERGHEFGATTGRQRRCGWFDAVATRRAAQINSLSGLCITKLDVLDGLETLRLCVGYRCQGELCETLPSEVETLSECEPVYEDMPGWAESTSGIERYEDLPENARAYLGRIEELVGVPVAMISTGPDRNETIVRQSPF.

GTP-binding positions include 13 to 19 (GDEGKGK) and 41 to 43 (GHT). The active-site Proton acceptor is the Asp-14. Positions 14 and 41 each coordinate Mg(2+). Residues 14 to 17 (DEGK), 39 to 42 (NAGH), Thr-130, Arg-144, Gln-225, Thr-240, and Arg-306 each bind IMP. His-42 serves as the catalytic Proton donor. 302-308 (ATTGRQR) lines the substrate pocket. GTP is bound by residues Arg-308, 334–336 (KLD), and 416–418 (STG).

This sequence belongs to the adenylosuccinate synthetase family. As to quaternary structure, homodimer. Mg(2+) is required as a cofactor.

The protein resides in the cytoplasm. It carries out the reaction IMP + L-aspartate + GTP = N(6)-(1,2-dicarboxyethyl)-AMP + GDP + phosphate + 2 H(+). Its pathway is purine metabolism; AMP biosynthesis via de novo pathway; AMP from IMP: step 1/2. In terms of biological role, plays an important role in the de novo pathway of purine nucleotide biosynthesis. Catalyzes the first committed step in the biosynthesis of AMP from IMP. The polypeptide is Adenylosuccinate synthetase (Halorhodospira halophila (strain DSM 244 / SL1) (Ectothiorhodospira halophila (strain DSM 244 / SL1))).